The primary structure comprises 294 residues: tRNA dimethylallyltransferase (294 aa).

10–17 (GPTAVGKT) contributes to the ATP binding site. Position 12–17 (12–17 (TAVGKT)) interacts with substrate. The segment at 35–38 (DSQQ) is interaction with substrate tRNA.

Belongs to the IPP transferase family. As to quaternary structure, monomer. Requires Mg(2+) as cofactor.

It carries out the reaction adenosine(37) in tRNA + dimethylallyl diphosphate = N(6)-dimethylallyladenosine(37) in tRNA + diphosphate. Its function is as follows. Catalyzes the transfer of a dimethylallyl group onto the adenine at position 37 in tRNAs that read codons beginning with uridine, leading to the formation of N6-(dimethylallyl)adenosine (i(6)A). The sequence is that of tRNA dimethylallyltransferase from Streptococcus sanguinis (strain SK36).